A 237-amino-acid chain; its full sequence is Ribose-5-phosphate isomerase A (237 aa).

Residues 33 to 36 (TGST), 88 to 91 (DGAD), and 101 to 104 (KGRG) each bind substrate. Glu-110 (proton acceptor) is an active-site residue. Lys-128 is a binding site for substrate.

This sequence belongs to the ribose 5-phosphate isomerase family. In terms of assembly, homodimer.

It carries out the reaction aldehydo-D-ribose 5-phosphate = D-ribulose 5-phosphate. It participates in carbohydrate degradation; pentose phosphate pathway; D-ribose 5-phosphate from D-ribulose 5-phosphate (non-oxidative stage): step 1/1. Catalyzes the reversible conversion of ribose-5-phosphate to ribulose 5-phosphate. In Methanoregula boonei (strain DSM 21154 / JCM 14090 / 6A8), this protein is Ribose-5-phosphate isomerase A.